A 301-amino-acid chain; its full sequence is MIILEQNNRIIVELLEQKFANAKEGGKPESVNVTFADFDGVLYKLSNPDGDRTKIILSISLKFYTELQQHGADDLLRRVYGGHMRSTPEQGFNVTLEYNLADLPADTTDLVQAASALKRNCFASVFEKYFEFQEAGQEGHKRAVINYRDDETMYIEAKADRVTVIFSTVFKDADDVIIGKVFLQEFREGRKASQTAPAVLYSLGEPPLELKDLPEARVGDNVGYITFVLFPRHTNKKTKDNTIDLIHSFRDYLHYHIKCSKVYLHTRMRAKTTDFLKVLNRARPEVKGEKKTFHGRTFQTQ.

The protein belongs to the ARPC2 family. Component of the Arp2/3 complex, at least composed of arx-1, arx-2, arx-4 and arx-6.

The protein resides in the cytoplasm. The protein localises to the cytoskeleton. Its function is as follows. Functions as actin-binding component of the Arp2/3 complex which is involved in regulation of actin polymerization and together with an activating nucleation-promoting factor (NPF) mediates the formation of branched actin networks. Seems to contact the mother actin filament. Plays a role in time-dependent memory loss and the retention of conditioned behavior over time. This chain is Probable actin-related protein 2/3 complex subunit 2, found in Caenorhabditis elegans.